The chain runs to 59 residues: Small integral membrane protein 30 (59 aa).

The signal sequence occupies residues 1 to 24 (MTSVSTQLSLVLMSLLLVLPVVEA). The Extracellular portion of the chain corresponds to 25 to 29 (VEAGD). Residues 30–50 (AIALLLGVVLSITGICACLGV) form a helical membrane-spanning segment. Over 51 to 59 (YARKRNGQM) the chain is Cytoplasmic.

In terms of assembly, interacts (via transmembrane domain) with antiviral protein MAVS (via transmembrane domain); the interaction disrupts MAVS interaction with RIGI and inhibits MAVS aggregation, resulting in the repression of type I interferon signaling and innate immune responses.

Its subcellular location is the endoplasmic reticulum membrane. It is found in the mitochondrion membrane. Functionally, negatively regulates antiviral innate immune responses. Disrupts the interaction of antiviral protein MAVS with innate immune receptor RIGI and inhibits MAVS aggregation, resulting in the repression of type I interferon signaling and innate immune responses. The chain is Small integral membrane protein 30 from Homo sapiens (Human).